The primary structure comprises 276 residues: Protein PXR1 (276 aa).

Residues 1 to 23 are disordered; the sequence is MGLAGTKIKQRFGNDPRNTNWSN. A G-patch domain is found at 25 to 71; sequence TSRFGHQYLAKMGWQQGSGLGLVSHALTTHVKVSIKDDNLGLGAKLH. Positions 152–172 are enriched in basic and acidic residues; sequence DDGKKSRKRKADESETKEDKK. The segment at 152 to 261 is disordered; it reads DDGKKSRKRK…SKWIKQKRAS (110 aa). A compositionally biased stretch (basic residues) spans 173-218; that stretch reads TLKKHKKEKKDKKEKKEKKKKKEKKDKKDKKDKKNKKDKKDKKDKK. Basic and acidic residues predominate over residues 219-228; it reads DKKDKIRTGS. Residues 229–239 are compositionally biased toward polar residues; it reads DETLVSKESSA.

It belongs to the PINX1 family.

The protein localises to the nucleus. Its subcellular location is the nucleolus. Functionally, involved in rRNA-processing at A0, A1 and A2 sites and negatively regulates telomerase. The chain is Protein PXR1 (PXR1) from Candida albicans (strain SC5314 / ATCC MYA-2876) (Yeast).